We begin with the raw amino-acid sequence, 270 residues long: ATP synthase subunit a (270 aa).

The next 6 helical transmembrane spans lie at 27 to 47, 90 to 110, 147 to 166, 182 to 202, 211 to 231, and 238 to 258; these read FWTF…VFIL, IAPL…MDLI, VNMT…FYSV, PFNT…SLIA, LFGN…TLGV, and FLWA…FMML.

Belongs to the ATPase A chain family. In terms of assembly, F-type ATPases have 2 components, CF(1) - the catalytic core - and CF(0) - the membrane proton channel. CF(1) has five subunits: alpha(3), beta(3), gamma(1), delta(1), epsilon(1). CF(0) has three main subunits: a(1), b(2) and c(9-12). The alpha and beta chains form an alternating ring which encloses part of the gamma chain. CF(1) is attached to CF(0) by a central stalk formed by the gamma and epsilon chains, while a peripheral stalk is formed by the delta and b chains.

The protein resides in the cell inner membrane. Its function is as follows. Key component of the proton channel; it plays a direct role in the translocation of protons across the membrane. This chain is ATP synthase subunit a, found in Pseudoalteromonas atlantica (strain T6c / ATCC BAA-1087).